Consider the following 77-residue polypeptide: SS18-like protein 2 (77 aa).

Residues Y50–V53 carry the SH2-binding motif.

It belongs to the SS18 family.

This is SS18-like protein 2 (Ss18l2) from Mus musculus (Mouse).